The sequence spans 959 residues: Translation initiation factor IF-2 (959 aa).

A compositionally biased stretch (basic and acidic residues) spans 1–10 (MSDKTNDDKT). Residues 1–374 (MSDKTNDDKT…SQMQETREKI (374 aa)) form a disordered region. The segment covering 27–37 (EQSTVRQNFSH) has biased composition (polar residues). 2 stretches are compositionally biased toward low complexity: residues 63 to 118 (AAAA…VTKP) and 128 to 138 (QRPGGQQAQRP). Basic and acidic residues-rich tracts occupy residues 154-225 (SEMD…EAAK) and 232-241 (ARSERRDDAR). Over residues 246–284 (GARPQQAGRPQGGRPQPAGRPQQGSPRPAPIIADAAPIA) the composition is skewed to low complexity. Residues 318–333 (PEVRAPKVVKGEDDRR) show a composition bias toward basic and acidic residues. In terms of domain architecture, tr-type G spans 457–626 (SRPPVVTIMG…LLQAEMLDLK (170 aa)). Positions 466-473 (GHVDHGKT) are G1. 466–473 (GHVDHGKT) serves as a coordination point for GTP. The G2 stretch occupies residues 491-495 (GITQH). The tract at residues 512–515 (DTPG) is G3. GTP contacts are provided by residues 512-516 (DTPGH) and 566-569 (NKID). A G4 region spans residues 566 to 569 (NKID). Residues 602 to 604 (SAK) form a G5 region.

Belongs to the TRAFAC class translation factor GTPase superfamily. Classic translation factor GTPase family. IF-2 subfamily.

It localises to the cytoplasm. Functionally, one of the essential components for the initiation of protein synthesis. Protects formylmethionyl-tRNA from spontaneous hydrolysis and promotes its binding to the 30S ribosomal subunits. Also involved in the hydrolysis of GTP during the formation of the 70S ribosomal complex. This is Translation initiation factor IF-2 from Brucella melitensis biotype 1 (strain ATCC 23456 / CCUG 17765 / NCTC 10094 / 16M).